The chain runs to 1104 residues: Lon protease homolog, mitochondrial (1104 aa).

The transit peptide at 1–54 (MLRGQTLRWRAALQTPRSLILRPLFAPGGYNVGPRSVLETSRRFRSLPPSLRTF) directs the protein to the mitochondrion. 2 disordered regions span residues 41–192 (SRRF…KPSV) and 296–317 (SLIPPGDSTKSGNSEDKTTEKR). Basic and acidic residues-rich tracts occupy residues 64-104 (KPPP…DSSG) and 125-144 (KAADRDQRSVTEDAKREAEA). The segment covering 158-169 (SDSSSESKPSGS) has biased composition (low complexity). Basic and acidic residues-rich tracts occupy residues 172–187 (GGDDGGKKGKKNDKAL) and 308–317 (NSEDKTTEKR). Residues 199 to 451 (VMAIPIAKRP…KGLVVLKKEL (253 aa)) form the Lon N-terminal domain. 604 to 611 (GPPGVGKT) contacts ATP. The span at 825-839 (AEGKAAQEESEKETG) shows a compositional bias: basic and acidic residues. The tract at residues 825 to 857 (AEGKAAQEESEKETGPIESTSEQEKATTENPRV) is disordered. One can recognise a Lon proteolytic domain in the interval 891 to 1077 (TFPPGVTMGL…SEVFDILFAD (187 aa)). Active-site residues include Ser983 and Lys1026.

This sequence belongs to the peptidase S16 family. As to quaternary structure, homohexamer or homoheptamer. Organized in a ring with a central cavity.

It is found in the mitochondrion matrix. It carries out the reaction Hydrolysis of proteins in presence of ATP.. Its function is as follows. ATP-dependent serine protease that mediates the selective degradation of misfolded, unassembled or oxidatively damaged polypeptides as well as certain short-lived regulatory proteins in the mitochondrial matrix. May also have a chaperone function in the assembly of inner membrane protein complexes. Participates in the regulation of mitochondrial gene expression and in the maintenance of the integrity of the mitochondrial genome. Binds to mitochondrial DNA in a site-specific manner. The polypeptide is Lon protease homolog, mitochondrial (pim1) (Emericella nidulans (strain FGSC A4 / ATCC 38163 / CBS 112.46 / NRRL 194 / M139) (Aspergillus nidulans)).